The sequence spans 309 residues: Intron-encoded DNA endonuclease ai2a (309 aa).

The protein belongs to the LAGLIDADG endonuclease family.

Its subcellular location is the mitochondrion. Mitochondrial DNA endonuclease involved in intron homing. Cleaves only one strand of intronless DNA sequence at the site which coincides with the I-SceII cleavage recognition site. The chain is Intron-encoded DNA endonuclease ai2a (ai2a) from Dictyostelium discoideum (Social amoeba).